The primary structure comprises 484 residues: ATP synthase subunit beta (484 aa).

152-159 (GGAGVGKT) lines the ATP pocket.

This sequence belongs to the ATPase alpha/beta chains family. In terms of assembly, F-type ATPases have 2 components, CF(1) - the catalytic core - and CF(0) - the membrane proton channel. CF(1) has five subunits: alpha(3), beta(3), gamma(1), delta(1), epsilon(1). CF(0) has three main subunits: a(1), b(2) and c(9-12). The alpha and beta chains form an alternating ring which encloses part of the gamma chain. CF(1) is attached to CF(0) by a central stalk formed by the gamma and epsilon chains, while a peripheral stalk is formed by the delta and b chains.

Its subcellular location is the cell inner membrane. The catalysed reaction is ATP + H2O + 4 H(+)(in) = ADP + phosphate + 5 H(+)(out). Produces ATP from ADP in the presence of a proton gradient across the membrane. The catalytic sites are hosted primarily by the beta subunits. The protein is ATP synthase subunit beta of Campylobacter lari (strain RM2100 / D67 / ATCC BAA-1060).